The chain runs to 141 residues: Large ribosomal subunit protein uL11 (141 aa).

It belongs to the universal ribosomal protein uL11 family. As to quaternary structure, part of the ribosomal stalk of the 50S ribosomal subunit. Interacts with L10 and the large rRNA to form the base of the stalk. L10 forms an elongated spine to which L12 dimers bind in a sequential fashion forming a multimeric L10(L12)X complex. Post-translationally, one or more lysine residues are methylated.

In terms of biological role, forms part of the ribosomal stalk which helps the ribosome interact with GTP-bound translation factors. In Streptococcus suis (strain 05ZYH33), this protein is Large ribosomal subunit protein uL11.